The chain runs to 600 residues: Long-chain-fatty-acid--CoA ligase FadD15 (600 aa).

This sequence belongs to the ATP-dependent AMP-binding enzyme family.

It carries out the reaction a long-chain fatty acid + ATP + CoA = a long-chain fatty acyl-CoA + AMP + diphosphate. The enzyme catalyses dodecanoate + ATP + CoA = dodecanoyl-CoA + AMP + diphosphate. It catalyses the reaction hexadecanoate + ATP + CoA = hexadecanoyl-CoA + AMP + diphosphate. The protein operates within lipid metabolism; fatty acid biosynthesis. Functionally, catalyzes the activation of long-chain fatty acids as acyl-coenzyme A (acyl-CoA), which are then transferred to the multifunctional polyketide synthase (PKS) type III for further chain extension. This is Long-chain-fatty-acid--CoA ligase FadD15 (fadD15) from Mycobacterium tuberculosis (strain ATCC 25618 / H37Rv).